Reading from the N-terminus, the 413-residue chain is CinA-like protein (413 aa).

The protein belongs to the CinA family.

This is CinA-like protein from Desulfosudis oleivorans (strain DSM 6200 / JCM 39069 / Hxd3) (Desulfococcus oleovorans).